A 107-amino-acid chain; its full sequence is Phosphoribosyl-ATP pyrophosphatase (107 aa).

Belongs to the PRA-PH family.

The protein localises to the cytoplasm. The catalysed reaction is 1-(5-phospho-beta-D-ribosyl)-ATP + H2O = 1-(5-phospho-beta-D-ribosyl)-5'-AMP + diphosphate + H(+). The protein operates within amino-acid biosynthesis; L-histidine biosynthesis; L-histidine from 5-phospho-alpha-D-ribose 1-diphosphate: step 2/9. This chain is Phosphoribosyl-ATP pyrophosphatase, found in Bacillus anthracis (strain A0248).